A 427-amino-acid polypeptide reads, in one-letter code: Endothelin-1 receptor (427 aa).

Positions 1–20 are cleaved as a signal peptide; the sequence is MSIFCLAAYFWLTMVGGVMA. Residues 21–80 lie on the Extracellular side of the membrane; sequence DNPERYSANLSSHMEDFTPFPGTEINFLGTTHRPPNLALPSNGSMHGYCPQQTKITTAFK. N-linked (GlcNAc...) asparagine glycans are attached at residues Asn-29 and Asn-62. The helical transmembrane segment at 81-102 threads the bilayer; the sequence is YINTVISCTIFIVGMVGNATLL. The Cytoplasmic portion of the chain corresponds to 103 to 112; the sequence is RIIYQNKCMR. A helical transmembrane segment spans residues 113-132; that stretch reads NGPNALIASLALGDLIYVVI. Topologically, residues 133-159 are extracellular; that stretch reads DLPINVFKLLAGRWPFDHNDFGVFLCK. A disulfide bond links Cys-158 and Cys-239. Residues 160–181 traverse the membrane as a helical segment; sequence LFPFLQKSSVGITVLNLCALSV. Residues 182-205 lie on the Cytoplasmic side of the membrane; sequence DRYRAVASWSRVQGIGIPLITAIE. A helical transmembrane segment spans residues 206 to 229; sequence IVSIWILSFILAIPEAIGFVMVPF. Residues 230 to 256 lie on the Extracellular side of the membrane; it reads EYKGELHRTCMLNATSKFMEFYQDVKD. Asn-242 carries an N-linked (GlcNAc...) asparagine glycan. Residues 257 to 278 traverse the membrane as a helical segment; the sequence is WWLFGFYFCMPLVCTAIFYTLM. The Cytoplasmic segment spans residues 279–306; it reads TCEMLNRRNGSLRIALSEHLKQRREVAK. Residues 307–328 traverse the membrane as a helical segment; the sequence is TVFCLVVIFALCWFPLHLSRIL. The Extracellular portion of the chain corresponds to 329–347; it reads KKTVYDEMDKNRCELLSFL. A helical transmembrane segment spans residues 348 to 372; that stretch reads LLMDYIGINLATMNSCINPIALYFV. The Cytoplasmic portion of the chain corresponds to 373-427; sequence SKKFKNCFQSCLCCCCHQSKSLMTSVPMNGTSIQWKNQEQNNHNTERSSHKDSMN. The disordered stretch occupies residues 408–427; that stretch reads KNQEQNNHNTERSSHKDSMN. A compositionally biased stretch (basic and acidic residues) spans 416-427; that stretch reads NTERSSHKDSMN. Phosphoserine is present on Ser-425.

It belongs to the G-protein coupled receptor 1 family. Endothelin receptor subfamily. EDNRA sub-subfamily. Interacts with HDAC7 and KAT5.

Its subcellular location is the cell membrane. In terms of biological role, receptor for endothelin-1. Mediates its action by association with G proteins that activate a phosphatidylinositol-calcium second messenger system. The rank order of binding affinities for ET-A is: ET1 &gt; ET2 &gt;&gt; ET3. The sequence is that of Endothelin-1 receptor from Mus musculus (Mouse).